The following is a 200-amino-acid chain: Glycerol-3-phosphate acyltransferase (200 aa).

A run of 5 helical transmembrane segments spans residues 2-22 (FNIS…AVIV), 51-71 (KAAA…VLLA), 84-104 (AIAA…FFGF), 114-134 (LGVL…IWLV), and 159-179 (FFMP…LVLF).

The protein belongs to the PlsY family. As to quaternary structure, probably interacts with PlsX.

Its subcellular location is the cell inner membrane. The enzyme catalyses an acyl phosphate + sn-glycerol 3-phosphate = a 1-acyl-sn-glycero-3-phosphate + phosphate. The protein operates within lipid metabolism; phospholipid metabolism. In terms of biological role, catalyzes the transfer of an acyl group from acyl-phosphate (acyl-PO(4)) to glycerol-3-phosphate (G3P) to form lysophosphatidic acid (LPA). This enzyme utilizes acyl-phosphate as fatty acyl donor, but not acyl-CoA or acyl-ACP. The sequence is that of Glycerol-3-phosphate acyltransferase from Neisseria meningitidis serogroup C (strain 053442).